The following is a 378-amino-acid chain: Nucleosome assembly protein 1;1 (378 aa).

Residues 33–87 adopt a coiled-coil conformation; it reads VNALKDKLQSLAGQHTDVLEALSPNVRKRVEYLREIQGQHDEIELKFFEERAALE. The Nuclear export signal signature appears at 54-69; sequence LSPNVRKRVEYLREIQ. The Nuclear localization signal motif lies at 230 to 235; that stretch reads KKKPKK. Residues 306–378 are disordered; that stretch reads AVQAEDFDDM…ADQPADCKQQ (73 aa). Positions 308-344 are enriched in acidic residues; it reads QAEDFDDMEDDEEDDEDDDEDEEEEEEDEDEDEDDEE. A Nuclear localization signal motif is present at residues 348 to 352; that stretch reads KPKKK. Over residues 356–378 the composition is skewed to low complexity; it reads KPKLPSKGGAQGGADQPADCKQQ. Cysteine methyl ester is present on Cys375. Cys375 carries S-farnesyl cysteine lipidation. Positions 376 to 378 are cleaved as a propeptide — removed in mature form; it reads KQQ.

This sequence belongs to the nucleosome assembly protein (NAP) family.

Its subcellular location is the nucleus. The protein localises to the cytoplasm. Its function is as follows. May modulate chromatin structure by regulation of nucleosome assembly/disassembly. The protein is Nucleosome assembly protein 1;1 (NAP1;1) of Oryza sativa subsp. japonica (Rice).